Reading from the N-terminus, the 442-residue chain is D-serine dehydratase 2 (442 aa).

Residue lysine 118 is modified to N6-(pyridoxal phosphate)lysine.

Belongs to the serine/threonine dehydratase family. DsdA subfamily. In terms of assembly, monomer. It depends on pyridoxal 5'-phosphate as a cofactor.

It catalyses the reaction D-serine = pyruvate + NH4(+). This Escherichia coli O6:K15:H31 (strain 536 / UPEC) protein is D-serine dehydratase 2.